The primary structure comprises 229 residues: Ribonuclease 3 (229 aa).

The RNase III domain maps to 8–130 (LTELEKIVGY…IIGAIYLDSD (123 aa)). Glu43 provides a ligand contact to Mg(2+). Asp47 is a catalytic residue. 2 residues coordinate Mg(2+): Asp116 and Glu119. Glu119 is an active-site residue. One can recognise a DRBM domain in the interval 157 to 227 (DPKTRLQELL…ATAALEHLQE (71 aa)). The tract at residues 201-229 (SPFKGTGTSRRKAEQAAATAALEHLQESA) is disordered.

It belongs to the ribonuclease III family. In terms of assembly, homodimer. It depends on Mg(2+) as a cofactor.

Its subcellular location is the cytoplasm. The catalysed reaction is Endonucleolytic cleavage to 5'-phosphomonoester.. Digests double-stranded RNA. Involved in the processing of primary rRNA transcript to yield the immediate precursors to the large and small rRNAs (23S and 16S). Processes some mRNAs, and tRNAs when they are encoded in the rRNA operon. Processes pre-crRNA and tracrRNA of type II CRISPR loci if present in the organism. The protein is Ribonuclease 3 of Idiomarina loihiensis (strain ATCC BAA-735 / DSM 15497 / L2-TR).